The primary structure comprises 372 residues: 3-galactosyl-N-acetylglucosaminide 4-alpha-L-fucosyltransferase FUT3 (372 aa).

The Cytoplasmic portion of the chain corresponds to 1–15 (MDPLGAAKTQWPWRR). A helical; Signal-anchor for type II membrane protein transmembrane segment spans residues 16-34 (CLAALLFQLLVAVCFFSYL). Over 35-372 (RVSRDDATGS…MVRSIAAWFT (338 aa)) the chain is Lumenal. Residues 40 to 68 (DATGSPRPGLMAVEPVTGAPGGSSRQDTT) are disordered. Asn165 and Asn196 each carry an N-linked (GlcNAc...) asparagine glycan.

It belongs to the glycosyltransferase 10 family. In terms of processing, glycosylated.

It localises to the golgi apparatus. It is found in the golgi stack membrane. The enzyme catalyses a beta-D-galactosyl-(1-&gt;3)-N-acetyl-beta-D-glucosaminyl derivative + GDP-beta-L-fucose = a beta-D-galactosyl-(1-&gt;3)-[alpha-L-fucosyl-(1-&gt;4)]-N-acetyl-beta-D-glucosaminyl derivative + GDP + H(+). The catalysed reaction is an N-acetyl-alpha-neuraminyl-(2-&gt;3)-beta-D-galactosyl-(1-&gt;4)-N-acetyl-beta-D-glucosaminyl derivative + GDP-beta-L-fucose = an alpha-Neu5Ac-(2-&gt;3)-beta-D-Gal-(1-&gt;4)-[alpha-L-Fuc-(1-&gt;3)]-beta-D-GlcNAc derivative + GDP + H(+). It carries out the reaction a beta-D-galactosyl-(1-&gt;4)-N-acetyl-beta-D-glucosaminyl derivative + GDP-beta-L-fucose = a beta-D-galactosyl-(1-&gt;4)-[alpha-L-fucosyl-(1-&gt;3)]-N-acetyl-beta-D-glucosaminyl derivative + GDP + H(+). It catalyses the reaction an alpha-Neu5Ac-(2-&gt;3)-beta-D-Gal-(1-&gt;4)-beta-D-GlcNAc-(1-&gt;3)-beta-D-Gal-(1-&gt;4)-[alpha-L-Fuc-(1-&gt;3)]-beta-D-GlcNAc derivative + GDP-beta-L-fucose = an alpha-Neu5Ac-(2-&gt;3)-beta-D-Gal-(1-&gt;4)-[alpha-L-Fuc-(1-&gt;3)]-beta-D-GlcNAc-(1-&gt;3)-beta-D-Gal-(1-&gt;4)-[alpha-L-Fuc-(1-&gt;3)]-beta-D-GlcNAc derivative + GDP + H(+). The enzyme catalyses Lc4Cer + GDP-beta-L-fucose = a lactoside III(4)-a-Fuc-Lc4Cer + GDP + H(+). The catalysed reaction is a beta-D-Gal-(1-&gt;3)-beta-D-GlcNAc-(1-&gt;3)-beta-D-Gal-(1-&gt;4)-beta-D-Glc-(1&lt;-&gt;1')-Cer(d18:1(4E)) + GDP-beta-L-fucose = a III(4)-a-Fuc-Lc4Cer(d18:1(4E)) + GDP + H(+). It carries out the reaction N-acetyl-alpha-neuraminosyl-(2-&gt;3)-beta-D-galactosyl-(1-&gt;3)-[N-acetyl-alpha-neuraminosyl-(2-&gt;6)]-N-acetyl-beta-D-glucosaminyl-(1-&gt;3)-beta-D-galactosyl-(1-&gt;4)-beta-D-glucosyl-(1&lt;-&gt;1')-N-acyl-sphing-4-enine + GDP-beta-L-fucose = N-acetyl-alpha-neuraminosyl-(2-&gt;3)-beta-D-galactosyl-(1-&gt;3)-alpha-L-fucosyl-(1-&gt;4)-[N-acetyl-alpha-neuraminosyl-(2-&gt;6)-N-acetyl-beta-D-glucosaminyl-(1-&gt;3)]-beta-D-galactosyl-(1-&gt;4)-beta-D-glucosyl-(1&lt;-&gt;1')-N-acyl-sphing-4-enine + GDP + H(+). It catalyses the reaction N-acetyl-alpha-neuraminosyl-(2-&gt;3)-beta-D-galactosyl-(1-&gt;3)-N-acetyl-beta-D-glucosaminyl-(1-&gt;3)-beta-D-galactosyl-(1-&gt;4)-beta-D-glucosyl-(1&lt;-&gt;1')-N-acyl-sphing-4-enine + GDP-beta-L-fucose = N-acetyl-alpha-neuraminosyl-(2-&gt;3)-beta-D-galactosyl-(1-&gt;3)-alpha-L-fucosyl-(1-&gt;4)-[N-acetyl-beta-D-glucosaminyl-(1-&gt;3)]-beta-D-galactosyl-(1-&gt;4)-beta-D-glucosyl-(1&lt;-&gt;1')-N-acyl-sphing-4-enine + GDP + H(+). The enzyme catalyses beta-D-galactosyl-(1-&gt;3)-N-acetyl-D-glucosamine + GDP-beta-L-fucose = beta-D-galactosyl-(1-&gt;3)-[alpha-L-fucosyl-(1-&gt;4)]-N-acetyl-D-glucosamine + GDP + H(+). The catalysed reaction is alpha-L-Fuc-(1-&gt;2)-beta-D-Gal-(1-&gt;3)-D-GlcNAc + GDP-beta-L-fucose = alpha-L-Fuc-(1-&gt;2)-beta-D-Gal-(1-&gt;3)-[alpha-L-Fuc-(1-&gt;4)]-D-GlcNAc + GDP + H(+). It carries out the reaction alpha-L-Fuc-(1-&gt;2)-beta-D-Gal-(1-&gt;4)-D-GlcNAc + GDP-beta-L-fucose = alpha-L-Fuc-(1-&gt;2)-beta-D-Gal-(1-&gt;4)-[alpha-L-Fuc-(1-&gt;3)]-D-GlcNAc + GDP + H(+). It catalyses the reaction beta-D-galactosyl-(1-&gt;4)-N-acetyl-D-glucosamine + GDP-beta-L-fucose = beta-D-galactosyl-(1-&gt;4)-[alpha-L-fucosyl-(1-&gt;3)]-N-acetyl-D-glucosamine + GDP + H(+). The enzyme catalyses lactose + GDP-beta-L-fucose = beta-D-galactosyl-(1-&gt;4)-[alpha-L-fucosyl-(1-&gt;3)]-D-glucose + GDP + H(+). The catalysed reaction is an alpha-Neu5Ac-(2-&gt;3)-beta-D-Gal-(1-&gt;3)-D-GlcNAc derivative + GDP-beta-L-fucose = an alpha-Neu5Ac-(2-&gt;3)-beta-D-Gal-(1-&gt;3)-[alpha-L-Fuc-(1-&gt;4)]-beta-D-GlcNAc derivative + GDP + H(+). It functions in the pathway protein modification; protein glycosylation. Catalyzes the transfer of L-fucose, from a guanosine diphosphate-beta-L-fucose, to both the subterminal N-acetyl glucosamine (GlcNAc) of type 1 chain (beta-D-Gal-(1-&gt;3)-beta-D-GlcNAc) glycolipids and oligosaccharides via an alpha(1,4) linkage, and the subterminal glucose (Glc) or GlcNAc of type 2 chain (beta-D-Gal-(1-&gt;4)-beta-D-GlcNAc) oligosaccharides via an alpha(1,3) linkage, independently of the presence of terminal alpha-L-fucosyl-(1,2) moieties on the terminal galactose of these acceptors and participates in the blood groups Lewis determination and expression of Lewis a (Le(a)), lewis b (Le(b)), Lewis x/SSEA-1 (Le(x)) and lewis y (Le(y)) antigens. Also catalyzes the transfer of L-fucose to subterminal GlcNAc of sialyl- and disialyl-lactotetraosylceramide to produce sialyl Lewis a (sLe(a)) and disialyl Lewis a via an alpha(1,4) linkage and therefore may regulate cell surface sialyl Lewis a expression and consequently regulates adhesive properties to E-selectin, cell proliferation and migration. Catalyzes the transfer of an L-fucose to 3'-sialyl-N-acetyllactosamine by an alpha(1,3) linkage, which allows the formation of sialyl-Lewis x structure and therefore may regulate the sialyl-Lewis x surface antigen expression and consequently adhesive properties to E-selectin. Prefers type 1 chain over type 2 acceptors. Type 1 tetrasaccharide is a better acceptor than type 1 disaccharide suggesting that a beta anomeric configuration of GlcNAc in the substrate is preferred. Lewis-positive (Le(+)) individuals have an active enzyme while Lewis-negative (Le(-)) individuals have an inactive enzyme. This is 3-galactosyl-N-acetylglucosaminide 4-alpha-L-fucosyltransferase FUT3 from Pongo pygmaeus (Bornean orangutan).